A 217-amino-acid polypeptide reads, in one-letter code: Adenylate kinase (217 aa).

Position 10–15 (10–15) interacts with ATP; that stretch reads GAGKGT. The segment at 30-59 is NMP; sequence STGDMLRAQIKAGTELGMKAKAIMDAGGLV. AMP-binding positions include Thr-31, Arg-36, 57-59, 85-88, and Gln-92; these read GLV and GFPR. The tract at residues 122–159 is LID; that stretch reads GRRVHVASGRTYHVVFNPPKVAGKDDVTGEDLIQRDDD. Residues Arg-123 and 132-133 each bind ATP; that span reads TY. 2 residues coordinate AMP: Arg-156 and Arg-167. ATP is bound at residue Gly-203.

Belongs to the adenylate kinase family. As to quaternary structure, monomer.

The protein localises to the cytoplasm. It carries out the reaction AMP + ATP = 2 ADP. It functions in the pathway purine metabolism; AMP biosynthesis via salvage pathway; AMP from ADP: step 1/1. Its function is as follows. Catalyzes the reversible transfer of the terminal phosphate group between ATP and AMP. Plays an important role in cellular energy homeostasis and in adenine nucleotide metabolism. The sequence is that of Adenylate kinase from Thiobacillus denitrificans (strain ATCC 25259 / T1).